The following is a 298-amino-acid chain: Protease HtpX homolog (298 aa).

2 consecutive transmembrane segments (helical) span residues 15–35 and 39–59; these read LIMV…GYLF and PWMG…IMWQ. Zn(2+) is bound at residue His143. Glu144 is a catalytic residue. His147 contributes to the Zn(2+) binding site. 2 helical membrane passes run 153 to 173 and 197 to 217; these read ILLS…SGMA and MIFK…SASL. Residue Glu227 coordinates Zn(2+).

The protein belongs to the peptidase M48B family. Zn(2+) is required as a cofactor.

It is found in the cell membrane. This is Protease HtpX homolog from Lactobacillus helveticus (strain DPC 4571).